The following is a 710-amino-acid chain: Integrator complex subunit 10 (710 aa).

Phosphoserine is present on residues S231, S381, and S382. A Glycyl lysine isopeptide (Lys-Gly) (interchain with G-Cter in SUMO2) cross-link involves residue K464.

Belongs to the Integrator subunit 10 family. Component of the Integrator complex, composed of core subunits INTS1, INTS2, INTS3, INTS4, INTS5, INTS6, INTS7, INTS8, INTS9/RC74, INTS10, INTS11/CPSF3L, INTS12, INTS13, INTS14 and INTS15. The core complex associates with protein phosphatase 2A subunits PPP2CA and PPP2R1A, to form the Integrator-PP2A (INTAC) complex. INTS10 is part of the tail subcomplex, composed of INTS10, INTS13, INTS14 and INTS15.

It is found in the nucleus. Its function is as follows. Component of the integrator complex, a multiprotein complex that terminates RNA polymerase II (Pol II) transcription in the promoter-proximal region of genes. The integrator complex provides a quality checkpoint during transcription elongation by driving premature transcription termination of transcripts that are unfavorably configured for transcriptional elongation: the complex terminates transcription by (1) catalyzing dephosphorylation of the C-terminal domain (CTD) of Pol II subunit POLR2A/RPB1 and SUPT5H/SPT5, (2) degrading the exiting nascent RNA transcript via endonuclease activity and (3) promoting the release of Pol II from bound DNA. The integrator complex is also involved in terminating the synthesis of non-coding Pol II transcripts, such as enhancer RNAs (eRNAs), small nuclear RNAs (snRNAs), telomerase RNAs and long non-coding RNAs (lncRNAs). Within the integrator complex, INTS10 is part of the integrator tail module that acts as a platform for the recruitment of transcription factors at promoters. May be not involved in the recruitment of cytoplasmic dynein to the nuclear envelope, probably as component of the integrator complex. The chain is Integrator complex subunit 10 from Homo sapiens (Human).